The chain runs to 151 residues: Allatostatin-A (151 aa).

Residues 1 to 21 (MNSLHAHLLLLAVCCVGYIAS) form the signal peptide. Residues 22–54 (SPVIGQDQRSGDSDADVLLAADEMADNGGDNID) constitute a propeptide that is removed on maturation. Residues Leu-64, Leu-88, and Leu-99 each carry the leucine amide modification. The propeptide occupies 103–135 (SDYDYDQDNEIDYRVPPANYLAAERAVRPGRQN). The interval 131-151 (PGRQNKRTTRPQPFNFGLGRR) is disordered. Leu-148 carries the post-translational modification Leucine amide.

This sequence belongs to the allatostatin family.

It is found in the secreted. May act as a neurotransmitter or neuromodulator. This is Allatostatin-A (AstA) from Drosophila melanogaster (Fruit fly).